The primary structure comprises 971 residues: MRPPAGLPSLSRRSRILLVVAVVVAALLLVGPRLIGMYTDWLWFGEVGYRGVFTKVLLTRFVLFLVVGIVVGAIVWLAMLLAYRARPVFVPVSGPNDPIARYRTTVMSRLRLFGVIIPVAIGILSGLIAQANWVTIQLFLNGQPFGITDPQFNLDVGFYTFDLPFYRFVLNWLFVSILLAFVANLVTHYVFGGIKLAGRAGTFTTAARVQLAVIAGTFVLLKAVAYWFDRYSLMSSSRKEPTFTGPGFTDINAVLPAKLILLSIAVICALAFFASIFTRDLRIPAMAVALLVLSSVLVGAVYPMIVEQFSVKPNAAQKESTYIERNIEATRQAYGITEENVDYVDYPGVGTKQPQDVPADRTTIANTRLLDPTILSPTFTAQRQLKNFYGFPQTLNVDRYEQDGQLRDFVVAARELSPNNLSGNQTDWINKHTVYTHGNGFVAAQANEVTAVQGDSQNNTGGYPIYSVSDLTTTPENENLKVDNPRSYYGEVISQSDADYSIVGSVDGEGPREYDTDTSKYTYTGSGGVSIGNWFNRLAFAAKYTERNILFSSAIGSNSKIIFKRDPKERVEEVAPWLTTDGAAYPAVVDGKMQWIIDGYTTAQDYPYAQRSSLDGLVEDSIDQTTGRLIPRQEFSYIRNSVKATVDAYDGTVTLYQVDEQDPVLKAWMGVFPNTVKPKSEISDDLQAHFRYPEDMFKVQREMLAKYHVDDPSEFFTNNAFWSVPSDPTIDTSANQPPYYVLVGDKDTAKADFRLTSPMVGFSRELLSAYISVANDKENYGKFTVLQLPTDTQTQGPQQAQSAMTSDSRVASEVSLLKQSNKIQYGNLLTLPIAEGGILYVEPLYSQRNSQNAFPQLARVLVSFSDTNGIRIGYAPTVSEAISQIWPGAGSAATVTQPAPDPDTGAQPETPTTPTAPAPPASSDDVTKALAEVNSAMAALKSAQQSGDFTSYGAALDRLQKAVDAYQALPR.

The next 7 membrane-spanning stretches (helical) occupy residues 16–36 (ILLVVAVVVAALLLVGPRLIG), 61–81 (FVLFLVVGIVVGAIVWLAMLL), 112–132 (LFGVIIPVAIGILSGLIAQAN), 172–192 (WLFVSILLAFVANLVTHYVFG), 209–229 (VQLAVIAGTFVLLKAVAYWFD), 257–277 (AKLILLSIAVICALAFFASIF), and 286–306 (MAVALLVLSSVLVGAVYPMIV). Residues 890–927 (GSAATVTQPAPDPDTGAQPETPTTPTAPAPPASSDDVT) are disordered.

It belongs to the UPF0182 family.

The protein resides in the cell membrane. This chain is UPF0182 protein RER_22310, found in Rhodococcus erythropolis (strain PR4 / NBRC 100887).